The following is a 364-amino-acid chain: MKIVLVLYDAGKHAADEEKLYGCTENKLGIANWLKDQGHELITTSDKEGETSELDKHIPDADIIITTPFHPAYITKERLDKAKNLKLVVVAGVGSDHIDLDYINQTGKKISVLEVTGSNVVSVAEHVVMTMLVLVRNFVPAHEQIINHDWEVAAIAKDAYDIEGKTIATIGAGRIGYRVLERLLPFNPKELLYYDYQALPKEAEEKVGARRVENIEELVAQADIVTVNAPLHAGTKGLINKELLSKFKKGAWLVNTARGAICVAEDVAAALESGQLRGYGGDVWFPQPAPKDHPWRDMRNKYGAGNAMTPHYSGTTLDAQTRYAEGTKNILESFFTGKFDYRPQDIILLNGEYVTKAYGKHDKK.

Substrate-binding residues include Val93 and Asn119. Residues 174–175 (RI), Asp195, 230–234 (PLHAG), Thr256, Asp282, and 311–314 (HYSG) each bind NAD(+).

Belongs to the D-isomer specific 2-hydroxyacid dehydrogenase family. FDH subfamily. Homodimer.

The protein resides in the cytoplasm. It catalyses the reaction formate + NAD(+) = CO2 + NADH. Cu(2+), Hg and p-chloromercuribenzoate are strong inhibitors of enzyme activity and Ca(2+), Mg(2+), Zn(2+), Mn(2+), Cd(2+) and Sn(2+) have no effect on activity indicating a cysteine residue in the protein is essential for enzyme activity or to maintain the proper structure of the enzyme. Nitrite and nitrate inhibit some enzyme activity, however cyanide, azide, thiocyanate and cyanate are strong inhibitors of the enzymatic reaction. The inhibition of cyanide is competitive with formate and reversible. Its function is as follows. Catalyzes the NAD(+)-dependent oxidation of formate to carbon dioxide. Formate oxidation is the final step in the methanol oxidation pathway in methylotrophic microorganisms. Has a role in the detoxification of exogenous formate in non-methylotrophic organisms. In Candida boidinii (Yeast), this protein is Formate dehydrogenase.